The chain runs to 250 residues: Nuclear transcription factor Y subunit C-4 (250 aa).

A compositionally biased stretch (low complexity) spans 1–10 (MDNNNNNNNQ). Disordered regions lie at residues 1–35 (MDNN…PSGS) and 209–250 (GVYA…DSQG). Residues 214–225 (PPSQAWQSVWQN) show a composition bias toward polar residues. The segment covering 227-242 (AGGGDDVSYGSGGSSG) has biased composition (gly residues).

The protein belongs to the NFYC/HAP5 subunit family. As to quaternary structure, heterotrimeric transcription factor composed of three components, NF-YA, NF-YB and NF-YC. NF-YB and NF-YC must interact and dimerize for NF-YA association and DNA binding. Ubiquitous. Present in etiolated seedlings.

The protein resides in the nucleus. Functionally, stimulates the transcription of various genes by recognizing and binding to a CCAAT motif in promoters. Involved in the abscisic acid (ABA) signaling pathway. The sequence is that of Nuclear transcription factor Y subunit C-4 (NFYC4) from Arabidopsis thaliana (Mouse-ear cress).